We begin with the raw amino-acid sequence, 213 residues long: Probable nicotinate-nucleotide adenylyltransferase (213 aa).

It belongs to the NadD family.

It catalyses the reaction nicotinate beta-D-ribonucleotide + ATP + H(+) = deamido-NAD(+) + diphosphate. It functions in the pathway cofactor biosynthesis; NAD(+) biosynthesis; deamido-NAD(+) from nicotinate D-ribonucleotide: step 1/1. In terms of biological role, catalyzes the reversible adenylation of nicotinate mononucleotide (NaMN) to nicotinic acid adenine dinucleotide (NaAD). The sequence is that of Probable nicotinate-nucleotide adenylyltransferase from Ruegeria pomeroyi (strain ATCC 700808 / DSM 15171 / DSS-3) (Silicibacter pomeroyi).